Here is a 224-residue protein sequence, read N- to C-terminus: Cytosolic-abundant heat soluble protein 77580 (224 aa).

Over residues 1–13 (MSNYQQESSYQYS) the composition is skewed to low complexity. Positions 1 to 38 (MSNYQQESSYQYSDRSNNGQQQEQQEKKEVEHSSYTHT) are disordered. A compositionally biased stretch (basic and acidic residues) spans 24 to 38 (QQEKKEVEHSSYTHT). Residues 83–191 (VIDTEAETEE…KRVLERSKFH (109 aa)) are a coiled coil. CAHS motif regions lie at residues 122–140 (YRKQ…LEKQ) and 159–177 (QKRQ…LERE). The segment covering 200–215 (AAAGSTHSGSSSVAVS) has biased composition (low complexity). Residues 200-224 (AAAGSTHSGSSSVAVSESEKFQTNN) form a disordered region.

Belongs to the Cytosolic-abundant heat soluble protein (CAHS) family.

Its subcellular location is the cytoplasm. In terms of biological role, CAHS proteins are cytosolic heat soluble proteins that seem to contribute to the anhydrobiosis in tardigrades, but their specific mechanisms are yet to be identified. It is possible that protection during anhydrobiosis might occur via the stabilization of vitrifying small molecules such as sugars, but not via the direct glass transition of CAHS proteins themselves. The chain is Cytosolic-abundant heat soluble protein 77580 from Hypsibius exemplaris (Freshwater tardigrade).